Consider the following 412-residue polypeptide: Protein trichome birefringence-like 13 (412 aa).

Residues 9–29 (PSLFPLLSLLCFISIFLLLSL) traverse the membrane as a helical; Signal-anchor for type II membrane protein segment. A GDS motif motif is present at residues 137–139 (GDS). Residues 385–399 (DCMHWCLPGLTDTWN) carry the DCXHWCLPGXXDXWN motif motif.

This sequence belongs to the PC-esterase family. TBL subfamily.

Its subcellular location is the membrane. May act as a bridging protein that binds pectin and other cell wall polysaccharides. Probably involved in maintaining esterification of pectins. May be involved in the specific O-acetylation of cell wall polymers. The chain is Protein trichome birefringence-like 13 (TBL13) from Arabidopsis thaliana (Mouse-ear cress).